Consider the following 341-residue polypeptide: L-threonine 3-dehydrogenase (341 aa).

Residue cysteine 38 participates in Zn(2+) binding. Residues threonine 40 and histidine 43 each act as charge relay system in the active site. Zn(2+) contacts are provided by histidine 63, glutamate 64, cysteine 93, cysteine 96, cysteine 99, and cysteine 107. Residues isoleucine 175, aspartate 195, arginine 200, 262–264 (LGI), and 286–287 (IY) each bind NAD(+).

It belongs to the zinc-containing alcohol dehydrogenase family. As to quaternary structure, homotetramer. Zn(2+) serves as cofactor.

The protein localises to the cytoplasm. It catalyses the reaction L-threonine + NAD(+) = (2S)-2-amino-3-oxobutanoate + NADH + H(+). It participates in amino-acid degradation; L-threonine degradation via oxydo-reductase pathway; glycine from L-threonine: step 1/2. Catalyzes the NAD(+)-dependent oxidation of L-threonine to 2-amino-3-ketobutyrate. This chain is L-threonine 3-dehydrogenase, found in Escherichia coli (strain K12 / MC4100 / BW2952).